Here is a 318-residue protein sequence, read N- to C-terminus: MRLLAGWLCLSLASVWLARRMWTLRSPLTRSLYVNMTSGPGGPAAAAGGRKENHQWYVCNREKLCESLQAVFVQSYLDQGTQIFLNNSIEKSGWLFIQLYHSFVSSVFSLFMSRTSINGLLGRGSMFVFSPDQFQRLLKINPDWKTHRLLDLGAGDGEVTKIMSPHFEEIYATELSETMIWQLQKKKYRVLGINEWQKTGFQYDVISCLNLLDRCDQPLTLLKDIRSVLEPTRGRVILALVLPFHPYVENVGGKWDKPSEILEIKGQNWEEQVNSLPEVFRKAGFVIEAFTRLPYLCEGDMYNDYYVLDDAVFVLKPV.

Residues 1-18 form the signal peptide; that stretch reads MRLLAGWLCLSLASVWLA. N-linked (GlcNAc...) asparagine glycosylation is present at N35. E174, N210, and Y295 together coordinate S-adenosyl-L-homocysteine.

It belongs to the METTL9 family.

Its subcellular location is the endoplasmic reticulum. It localises to the mitochondrion. It catalyses the reaction L-histidyl-[protein] + S-adenosyl-L-methionine = N(pros)-methyl-L-histidyl-[protein] + S-adenosyl-L-homocysteine + H(+). Protein-histidine N-methyltransferase that specifically catalyzes 1-methylhistidine (pros-methylhistidine) methylation of target proteins. Specifically methylates the second His of proteins with a His-x-His (HxH) motif (where 'x' is preferably a small amino acid), while exploiting the first one as a recognition signature. Catalyzes methylation of target proteins such as S100A9, NDUFB3, SLC39A5, SLC39A7, ARMC6 and DNAJB12; 1-methylhistidine modification may affect the binding of zinc and other metals to its target proteins. Constitutes the main methyltransferase for the 1-methylhistidine modification in cell. The chain is Protein-L-histidine N-pros-methyltransferase from Bos taurus (Bovine).